The sequence spans 172 residues: Protein LOL2 (172 aa).

Putative zinc finger stretches follow at residues 4-34 (QIVC…VSST), 44-74 (HLIC…VNLV), and 82-112 (HLNC…ITNT).

It localises to the nucleus. Its function is as follows. Putative zinc finger that may be involved in programmed cell death and defense response. The sequence is that of Protein LOL2 (LOL2) from Oryza sativa subsp. japonica (Rice).